A 150-amino-acid chain; its full sequence is Large ribosomal subunit protein uL16 (150 aa).

It belongs to the universal ribosomal protein uL16 family. Component of the small ribosomal subunit. Mature ribosomes consist of a small (40S) and a large (60S) subunit. The 40S subunit contains about 33 different proteins and 1 molecule of RNA (18S). The 60S subunit contains about 49 different proteins and 3 molecules of RNA (25S, 5.8S and 5S).

This Nicotiana tabacum (Common tobacco) protein is Large ribosomal subunit protein uL16 (RPL10).